The following is a 387-amino-acid chain: Phosphoglycerate kinase (387 aa).

Substrate is bound by residues 21 to 23 (DLN), Arg36, 59 to 62 (HLGR), Arg113, and Arg146. Residues Lys197, Glu314, and 340–343 (GGDT) contribute to the ATP site.

This sequence belongs to the phosphoglycerate kinase family. As to quaternary structure, monomer.

It localises to the cytoplasm. It catalyses the reaction (2R)-3-phosphoglycerate + ATP = (2R)-3-phospho-glyceroyl phosphate + ADP. It participates in carbohydrate degradation; glycolysis; pyruvate from D-glyceraldehyde 3-phosphate: step 2/5. This chain is Phosphoglycerate kinase, found in Yersinia pestis bv. Antiqua (strain Antiqua).